The following is a 563-amino-acid chain: Pyruvate decarboxylase (563 aa).

Positions 28 and 115 each coordinate pyruvate. Thiamine diphosphate contacts are provided by residues Thr390 and Gly413–Ile415. Asp444 lines the Mg(2+) pocket. Residues Gly445–Ser446 and Asn471–Ile476 each bind thiamine diphosphate. Mg(2+)-binding residues include Asn471 and Gly473. Glu477 lines the pyruvate pocket.

The protein belongs to the TPP enzyme family. As to quaternary structure, homotetramer. Mg(2+) serves as cofactor. It depends on thiamine diphosphate as a cofactor.

The enzyme catalyses a 2-oxocarboxylate + H(+) = an aldehyde + CO2. It catalyses the reaction pyruvate + H(+) = acetaldehyde + CO2. In Kluyveromyces lactis (strain ATCC 8585 / CBS 2359 / DSM 70799 / NBRC 1267 / NRRL Y-1140 / WM37) (Yeast), this protein is Pyruvate decarboxylase (PDC1).